The chain runs to 324 residues: Pancreas transcription factor 1 subunit alpha (324 aa).

The bHLH domain occupies 160 to 212 (QLRQAANVRERRRMQSINDAFEGLRSHIPTLPYEKRLSKVDTLRLAIGYINFL). The tract at residues 302–324 (DPRKLNSKSFDNIENEPPFEFVS) is disordered.

As to quaternary structure, component of the pancreas transcription factor 1 complex (PTF1) which is composed of TCF3/p75, TCF12/p64 and PTF1A/p48. TCF3 is responsible for the nuclear import of the p48/p64 complex. Interacts with TCF3 and RBPSUH/RBP-Jkappa. Expressed in precursors of pancreatic islets, acini and ducts.

Its subcellular location is the nucleus. The protein resides in the cytoplasm. In terms of biological role, transcription factor implicated in the cell fate determination in various organs. Binds to the E-box consensus sequence 5'-CANNTG-3'. Plays a role in early and late pancreas development and differentiation. Important for determining whether cells allocated to the pancreatic buds continue towards pancreatic organogenesis or revert back to duodenal fates. May be involved in the maintenance of exocrine pancreas-specific gene expression including ELA1 and amylase. Required for the formation of pancreatic acinar and ductal cells. Plays an important role in cerebellar development. Directly regulated by FOXN4 and RORC during retinal development, FOXN4-PTF1A pathway plays a central role in directing the differentiation of retinal progenitors towards horizontal and amacrine fates. The sequence is that of Pancreas transcription factor 1 subunit alpha (Ptf1a) from Mus musculus (Mouse).